The following is a 509-amino-acid chain: Maturase K (509 aa).

Belongs to the intron maturase 2 family. MatK subfamily.

The protein localises to the plastid. It localises to the chloroplast. Functionally, usually encoded in the trnK tRNA gene intron. Probably assists in splicing its own and other chloroplast group II introns. This is Maturase K from Nicotiana clevelandii (Wild tobacco).